We begin with the raw amino-acid sequence, 589 residues long: MTCWLHMLGLHLLLLPTAPLAAGCPARCECSASTRTVACGRRRLTAIPEGIPAETRMLELSRNRIRCLNPGDLASLPTLEELDLNHNVIAHVEPGAFANLPRLRVLRLRGNQLKLIPPGVFTHLDSLTLLDLSENKLVILLDFSFQDLRSLQRLEVGDNDLVFISRRAFAGLLGLAELTLERCNLTSLSPESLGHLRGLGALRLRHLAIAALEDQNFQKLPGLSHLEIDNWPLLEEVAPGSLRGLNLTSLSITHTNITAVPAAALRQQAHLTCLNLSHNPISMVPRGSFRDLVRLRELHLAGALLAVIEPQAFVGLRQIRLLNLSDNLLSTLEENTFHSVNTLETLRVDGNPLACDCRLLWIVQRRKTLNFDGRLPACATPAEVRGDALHNLPDSVLFEYFVCRKPKIRERRLQHVTATEGDDVRFLCRAEGEPAPTVAWVTPQHHSVTAASRGRARVLPGGTLTIADTRPQDSGTYTCVASNAGGNDTYFATLTVQPAANRTQGDGHNETQVGVRFPLDLTTILVSTAMGCITFLGVVLFCFLLLFVWSRGRGQHKNNFSVEYSFRKVDGPAAAAGQGGARKFNMKMI.

Positions 1–23 are cleaved as a signal peptide; it reads MTCWLHMLGLHLLLLPTAPLAAG. The LRRNT domain maps to 24-53; it reads CPARCECSASTRTVACGRRRLTAIPEGIPA. The Extracellular segment spans residues 24–528; sequence CPARCECSAS…LDLTTILVST (505 aa). 11 LRR repeats span residues 54–75, 78–99, 102–123, 126–147, 150–171, 174–195, 206–227, 246–267, 270–291, 294–315, and 318–339; these read ETRM…DLAS, TLEE…AFAN, RLRV…VFTH, SLTL…SFQD, SLQR…AFAG, GLAE…SLGH, HLAI…SHLE, NLTS…ALRQ, HLTC…SFRD, RLRE…AFVG, and QIRL…TFHS. Asn-184 is a glycosylation site (N-linked (GlcNAc...) asparagine). Asn-246, Asn-256, and Asn-275 each carry an N-linked (GlcNAc...) asparagine glycan. An N-linked (GlcNAc...) asparagine glycan is attached at Asn-323. One can recognise an LRRCT domain in the interval 351–405; sequence NPLACDCRLLWIVQRRKTLNFDGRLPACATPAEVRGDALHNLPDSVLFEYFVCRK. One can recognise an Ig-like C2-type domain in the interval 406–495; that stretch reads PKIRERRLQH…GNDTYFATLT (90 aa). Cys-428 and Cys-479 are oxidised to a cystine. Residues Asn-487, Asn-501, and Asn-509 are each glycosylated (N-linked (GlcNAc...) asparagine). The helical transmembrane segment at 529 to 549 threads the bilayer; the sequence is AMGCITFLGVVLFCFLLLFVW. Topologically, residues 550 to 589 are cytoplasmic; that stretch reads SRGRGQHKNNFSVEYSFRKVDGPAAAAGQGGARKFNMKMI.

Its subcellular location is the membrane. The protein is Leucine-rich repeat and immunoglobulin-like domain-containing nogo receptor-interacting protein 3 (Lingo3) of Mus musculus (Mouse).